The sequence spans 493 residues: NAD(P)H dehydrogenase (quinone) (493 aa).

Residues 12-13 (PA), 35-37 (DCD), 42-43 (AA), Lys52, Gly117, Asp317, 324-325 (LA), and Tyr450 each bind FAD.

This sequence belongs to the class-I pyridine nucleotide-disulfide oxidoreductase family. In terms of assembly, homotetramer. It depends on FAD as a cofactor.

It catalyses the reaction a quinone + NADH + H(+) = a quinol + NAD(+). It carries out the reaction a quinone + NADPH + H(+) = a quinol + NADP(+). In terms of biological role, may contribute to virulence by increasing resistance to reactive oxygen intermediates. It can reduce 2,6-dimethyl-1,4-benzoquinone (DMBQ), 5-hydroxy-1,4-naphthaquinone (5-HNQ) and menadione. This Mycobacterium tuberculosis (strain CDC 1551 / Oshkosh) protein is NAD(P)H dehydrogenase (quinone) (lpdA).